We begin with the raw amino-acid sequence, 1529 residues long: MKNFKNQNFQKENLNLSFSQKRKKFSGKIGICFFEYNFFQKNFHVQNFPIKKCRLLAQVSEQTPQISSFRQTSNFTPNLIKKKLLNGYSKIHELKLVTIELASPEKIKAWAEKELPNGKIFGEVTNANTFHYRTFKPSKGGLFCEHIFGPLKDFECACGKRQRPSALESRKILEHQKTSRYFCPNCDVEYTWSIIRRYQLGYIKLNAPVTHLWYFKTNPSYLSILFDMKRRHLESIIYCTETITIENTWKYSQQTSILNRSPKDLYLTWQKFFTLEEQLQQYNRIYQNKHQHQKQRKLEFRNLSILQNKISPQINWKNFDQQIVEKNQNNSVFAKNFQTFENIETFGLKRKHSIFENISMQKQKKFGTYFFEEIWKIILQKSYKNSFLFLNSQECFSEHFFQNIYRISNIFLFSSKKIQKFLKFHEIFIFGNTESLNKTILELKNKKRTVNFFSKDFTPFFIDQNVFESHNSLKIKKQYWKSFFFLFEFTRFFLSKKNTKIQNLNVLSKKDFLFLVNLIPFLKKLALFQNLQVFKKNTKKSHAFYIQNLSKKNKSLKKKIFLKKNLFTEQNLISFQNQVQKNKIFSVEPNFSEKIFSTFFSNDFLNSNQTFEFNLFNLFFDVSLNFGKILAFLKLYYEIDFCSFVQKHSFDFEKNYSFKNSFSTKQFELFSNQSTLVSMYETVFFDYFSFFFHFLKIFKFSNFNMSNSVSLEFLNDSEKENIFYSQNFRTQKNFFFSLKALSFLLVGFNYENKQNLLSDPFDSGFEIFPNQNSVFMTQNFFSSKLFFKEKKQKKNNSKKLKKQLEIFISNKPLLSRQNFTERKKQIQNKKVQKFFDFDSMTENFECSFSSEKKFKLFQKKVSNSSLQLTQIQKKFKEPFLYKFIKQKNQKKKKFNNFHVFLSTKANSNLFFFEKKQKQQIQEKFQKMEKNHFLQNSILTIAYNYLWNNDADWKYFIYYNSLFFYEFEDHPIFLYRSLSPIKDTKNNQAFMFSDTNSSAIKFGQSFSSFLSWSIDDLPKNFFVGAGILEKLLTEYTSSELRKMTKQHQILLPKINQMLRFLKQNAKTKKDSLKIQKYFQKREQIIRRLKFLRKFSRRNSNPTFMILKNLPVLPPDLRPILKLQNQIAASDLNRFYQRIIYRNDRLKKFAKDSATNQSFEIKYAQRLLQEAVDNLIQNGKGSVKAETNSRGQPLKSLSEILKGKQGRFRQYLLGKRVDYSGRSVIVVGPELKLYECGLPKEMALELFLPFLIQYILQNKLAQTVVGAKNLLKSDSNLTLHLLHKVIKNIPILLNRAPTLHRLGFQAFLPKLIEGRAILLHPMVCPSFNADFDGDQMAVHIPLTVEARTEAWKFMLATNNLMNSATGEAIILPSQDMVLGCYYLTLDFQSKFVGVQLSNLLKKQNSFFPFSKPTYLGKEKTFQIQGKNFEKFGIQNKAFLLFSNFLSVLNAYQRKEISLHTPVWVKWNSNVDFGNEFSKPVEIRLQINGSWEEIQPKYTTFYNYKNKQLQKIIRTTPGRILMNFMIQQCSMS.

Positions 156, 158, 183, and 186 each coordinate Zn(2+). Residues Asp1328, Asp1330, and Asp1332 each contribute to the Mg(2+) site.

It belongs to the RNA polymerase beta' chain family. RpoC1 subfamily. As to quaternary structure, in plastids the minimal PEP RNA polymerase catalytic core is composed of four subunits: alpha, beta, beta', and beta''. When a (nuclear-encoded) sigma factor is associated with the core the holoenzyme is formed, which can initiate transcription. Requires Mg(2+) as cofactor. Zn(2+) is required as a cofactor.

The protein resides in the plastid. Its subcellular location is the chloroplast. The catalysed reaction is RNA(n) + a ribonucleoside 5'-triphosphate = RNA(n+1) + diphosphate. Its function is as follows. DNA-dependent RNA polymerase catalyzes the transcription of DNA into RNA using the four ribonucleoside triphosphates as substrates. The polypeptide is DNA-directed RNA polymerase subunit beta' (Tetradesmus obliquus (Green alga)).